Consider the following 816-residue polypeptide: MGNYSTAIDKKWQDKWAESGLYKFDPNKEVEKLYVLEMFSYPSGSQLHAGHWFNYGPVDSWARFKRMQGYNVFQPMGFDAFGLPAENFAIKTGIHPQDSTIKNIAKMEEQLKAMGAMFNWENEVVTCSPEYYKWTQWLFLKLYEKGLAYRKKAPVNWCPSCQTVLANEQVVDGACERCSTEVTKKDLTQWFFKITDYADELLDKLDGLDWPEKTVSMQKHWIGRSTGSQVNFKVKDSDLNFDVFTTRVDTLCGVSYVVLAPENPLVDEIVSAEQKEAVENYKEEAKKQSDIERQSISREKTGVFTGAYAIHPLTGKEVPIWVGDYVLATYGTGAVMAVPAHDERDFAFAEKFNLPINRVIEAKDGSETNLPFCEHGILVNSGEFDGLTTDEAKEKIVEKLASMGLGEKKVNFRLRDWLVSRQRYWGAPIPVVYCEECGIVPVPESQLPVELPYDVEFAPDGKSPLAKSEAFVNTTCPHCGKPAKRETDTLDTFVCSSWYYLRYPDNKNTEAPFNPELINKMLPVDKYVGGPEHACMHLLYARFITKALRDMGYLNFDEPFTSLTHQGLILGPDGLKMSKSKGNTISPDDYIKEYGADVFRMYLMFGFAYTEGGAWSDDGIKSVNRFVERIERIIDTAREAISKGENNKTTMDKAEKELNYWRHNTIKSVTDDTDKLQFNTAIARMMEFINALSKYTQEKEMNLDFLKDVVSDYLRLLAPFAPHFSEEQWNLLGNSYSIFNEAWPKFDPKALVKDEVEIAIQVNGKIKNKIMVSSDLDEEGIKAAALADEKIIASTEGKTVVKVIVIKGRLVNIVVK.

The 'HIGH' region motif lies at 40–51; the sequence is SYPSGSQLHAGH. The short motif at 576–580 is the 'KMSKS' region element; the sequence is KMSKS. Residue Lys579 coordinates ATP.

This sequence belongs to the class-I aminoacyl-tRNA synthetase family.

It localises to the cytoplasm. The enzyme catalyses tRNA(Leu) + L-leucine + ATP = L-leucyl-tRNA(Leu) + AMP + diphosphate. The polypeptide is Leucine--tRNA ligase (Clostridium perfringens (strain SM101 / Type A)).